A 160-amino-acid polypeptide reads, in one-letter code: uncharacterized protein (160 aa).

Positions 1–29 are cleaved as a signal peptide; the sequence is MTGKTHIMGGIASCTAAAYYYGFDPVLMA. A run of 2 helical transmembrane segments spans residues 67–87 and 137–157; these read TFTH…TYIP and QLVL…LFHG.

This sequence to E.coli YdjM.

The protein resides in the cell membrane. This is an uncharacterized protein from Bacillus subtilis (strain 168).